Consider the following 464-residue polypeptide: MKNIKIVRILKHDEAIRIEHRISELYSDEFGVVYAGNHLIFNWYQRLYLSRNILISKKSKSRKGLIQMIFIIGICTVFLIIYGIWEQRCHQKRLNSIPIRVNINGIRGKSTVTRLITGVVQEAKYKTVGKTTGTSARMIYWFTDEEQPIKRRKEGPNIGEQRRVVKEAADLEAEALICECMAVQPDYQIIFQNKMIQANVGVIVNVLEDHMDVMGPTLDEVAEAFTATIPYNGHLVTIESEYLDYFKEVAEERNTKVIVADNSRISEEFLRKFDYMVFPDNASLALAVAEALGIDEETAFRGMLNAHPDPGAMRITRFADQSKPAFFVNGFAANDPSSTLRIWERVDDFGYSNLAPIVIMNCRPDRVDRTEQFARDVLPYIKAEIVIAIGETTAPITSAFEKGDIPTQEYWNLEGWSTSEIMSRMRPYLKNRIVYGVGNIHGAAEPLIDMIMEEQIGKKQAKVI.

Residues 65 to 85 (LIQMIFIIGICTVFLIIYGIW) traverse the membrane as a helical segment.

It localises to the cell membrane. The protein operates within capsule biogenesis; capsule polysaccharide biosynthesis. In terms of biological role, essential for the synthesis of the polyglutamate capsule of B.anthracis which is one of the principal virulence factors during anthrax infection. May form a polyglutamyl synthetase complex together with proteins CapA and CapC. This chain is Capsule biosynthesis protein CapB (capB), found in Bacillus anthracis.